A 259-amino-acid chain; its full sequence is DNA-directed RNA polymerase 30 kDa polypeptide (259 aa).

The segment at 155 to 195 (YNTPCPNCKSRNTTPMMIQTRAADEPPLVRHACRDCKQHFK) adopts a TFIIS-type zinc-finger fold. Zn(2+) contacts are provided by Cys159, Cys162, Cys187, and Cys190. The segment at 220–259 (EILPDNNPSPPESPEPASPIDDGLIRVTFDRNDEPPEDDE) is disordered. The segment covering 226-236 (NPSPPESPEPA) has biased composition (pro residues).

This sequence belongs to the poxviridae DNA-directed RNA polymerase 30 kDa subunit family. As to quaternary structure, the DNA-dependent RNA polymerase (vRNAP) consists of eight subunits encoded by early viral genes and termed according to their apparent molecular masses Rpo147, Rpo132, Rpo35, Rpo30, Rpo22, Rpo19, Rpo18, and Rpo7. The same holoenzyme, with the addition of the transcription-specificity factor RAP94, is used for early gene expression.

The protein localises to the virion. It is found in the host cytoplasm. It catalyses the reaction RNA(n) + a ribonucleoside 5'-triphosphate = RNA(n+1) + diphosphate. Part of the DNA-dependent RNA polymerase which catalyzes the transcription of viral DNA into RNA using the four ribonucleoside triphosphates as substrates. Responsible for the transcription of early, intermediate and late genes. DNA-dependent RNA polymerase associates with the early transcription factor (ETF), itself composed of OPG118 and OPG134, thereby allowing the early genes transcription. Late transcription, and probably also intermediate transcription, require newly synthesized RNA polymerase. The chain is DNA-directed RNA polymerase 30 kDa polypeptide (OPG066) from Variola virus (isolate Human/India/Ind3/1967) (VARV).